We begin with the raw amino-acid sequence, 254 residues long: Mediator of RNA polymerase II transcription subunit 6 (254 aa).

The disordered stretch occupies residues 190–254; the sequence is PTFYQTKPGE…PPPEKRARVQ (65 aa). Pro residues predominate over residues 227 to 245; that stretch reads PPAPPAPPRPPPQTTPNKP.

This sequence belongs to the Mediator complex subunit 6 family. Component of the Mediator complex.

Its subcellular location is the nucleus. Functionally, component of the Mediator complex, a coactivator involved in the regulated transcription of nearly all RNA polymerase II-dependent genes. Mediator functions as a bridge to convey information from gene-specific regulatory proteins to the basal RNA polymerase II transcription machinery. Mediator is recruited to promoters by direct interactions with regulatory proteins and serves as a scaffold for the assembly of a functional preinitiation complex with RNA polymerase II and the general transcription factors. The chain is Mediator of RNA polymerase II transcription subunit 6 (med6) from Danio rerio (Zebrafish).